Here is a 146-residue protein sequence, read N- to C-terminus: Phospholipase A2 OS2 (146 aa).

The N-terminal stretch at 1–27 (MHPAHLLVLLAVCVSLLGASDIPPLPL) is a signal peptide. Disulfide bonds link cysteine 38-cysteine 99, cysteine 54-cysteine 145, cysteine 56-cysteine 72, cysteine 71-cysteine 126, cysteine 78-cysteine 119, cysteine 88-cysteine 112, and cysteine 106-cysteine 117. Tyrosine 55, glycine 57, and glycine 59 together coordinate Ca(2+). Histidine 75 is an active-site residue. Aspartate 76 lines the Ca(2+) pocket. The active site involves aspartate 120.

Belongs to the phospholipase A2 family. Group I subfamily. D49 sub-subfamily. Monomer. The cofactor is Ca(2+). In terms of tissue distribution, expressed by the venom gland.

It is found in the secreted. The catalysed reaction is a 1,2-diacyl-sn-glycero-3-phosphocholine + H2O = a 1-acyl-sn-glycero-3-phosphocholine + a fatty acid + H(+). In terms of biological role, snake venom phospholipase A2 (PLA2) that shows high presynaptic neurotoxicity in vertebrata that is independent of catalytic activity, as well as local myotoxicity when intramuscularly injected into mice. Blocks acetylcholine release in Aplysia neurons, and potentiates pro-inflammatory cellular signaling. Potentiates glutamate excitoxicity when coinjected into brain of rats. May act by binding in a calcium-dependent fashion and with high affinity to a neuronal-type (N-type) PLA2 receptor, and with very high affinity to a muscle-type (M-type) PLA2 receptor. In vitro, shows a high-specific activity on E.coli membranes and is more efficient on the anionic phospholipid POPG than on the anionic phospholipid POPS or the zwitterionic phospholipid POPC. Exerts catalytically-independent anti-HIV (IC(50) is 35 nM) activity and catalytically-dependent antimalarial activity (IC(50) is 3.1 nM when tested on P.falciparum grown in serum that contains lipoproteins). PLA2 catalyzes the calcium-dependent hydrolysis of the 2-acyl groups in 3-sn-phosphoglycerides. This chain is Phospholipase A2 OS2, found in Oxyuranus scutellatus scutellatus (Australian taipan).